The sequence spans 191 residues: Ion-translocating oxidoreductase complex subunit B (191 aa).

The tract at residues 1-26 (MSAIWIAIAVLSALSLVFGGLLGYAS) is hydrophobic. Residues 32 to 91 (EEDPIVEQIDAILPQSQCGQCGYPGCRPYADAVGNNGEMINKCAPGGEQTMLKLAALLNV) enclose the 4Fe-4S domain. [4Fe-4S] cluster contacts are provided by Cys49, Cys52, Cys57, Cys74, Cys116, Cys119, Cys122, Cys126, Cys146, Cys149, Cys152, and Cys156. 4Fe-4S ferredoxin-type domains are found at residues 107-136 (KVAWIDEANCIGCTKCIQACPVDAIVGATR) and 137-166 (AMHTVLSDICTGCDLCVAPCPTDCIEMRPV).

This sequence belongs to the 4Fe4S bacterial-type ferredoxin family. RnfB subfamily. The complex is composed of six subunits: RnfA, RnfB, RnfC, RnfD, RnfE and RnfG. [4Fe-4S] cluster is required as a cofactor.

It localises to the cell inner membrane. Functionally, part of a membrane-bound complex that couples electron transfer with translocation of ions across the membrane. The chain is Ion-translocating oxidoreductase complex subunit B from Erwinia tasmaniensis (strain DSM 17950 / CFBP 7177 / CIP 109463 / NCPPB 4357 / Et1/99).